A 311-amino-acid polypeptide reads, in one-letter code: Transcriptional regulatory protein MoaR1 (311 aa).

A DNA-binding region (ompR/PhoB-type) is located at residues 15-117 (LNATTAGAVQ…SEPPGYRLLI (103 aa)).

Belongs to the AfsR/DnrI/RedD regulatory family.

Functionally, acts as a positive transcriptional regulator of the molybdopterin biosynthesis moa1 locus, promoting the expression of the moaA1B1C1D1 genes. The polypeptide is Transcriptional regulatory protein MoaR1 (moaR1) (Mycobacterium bovis (strain BCG / Pasteur 1173P2)).